We begin with the raw amino-acid sequence, 287 residues long: Urease accessory protein UreD (287 aa).

It belongs to the UreD family. In terms of assembly, ureD, UreF and UreG form a complex that acts as a GTP-hydrolysis-dependent molecular chaperone, activating the urease apoprotein by helping to assemble the nickel containing metallocenter of UreC. The UreE protein probably delivers the nickel.

It localises to the cytoplasm. Its function is as follows. Required for maturation of urease via the functional incorporation of the urease nickel metallocenter. This chain is Urease accessory protein UreD, found in Ureaplasma parvum serovar 3 (strain ATCC 27815 / 27 / NCTC 11736).